Here is a 635-residue protein sequence, read N- to C-terminus: Threonine--tRNA ligase (635 aa).

The 61-residue stretch at 1–61 (MPIITLPDGN…EKDANIAIIT (61 aa)) folds into the TGS domain. A catalytic region spans residues 242–533 (DHRKIGKQLD…LTEEYAGVYP (292 aa)). Zn(2+)-binding residues include cysteine 333, histidine 384, and histidine 510.

The protein belongs to the class-II aminoacyl-tRNA synthetase family. As to quaternary structure, homodimer. The cofactor is Zn(2+).

It is found in the cytoplasm. It carries out the reaction tRNA(Thr) + L-threonine + ATP = L-threonyl-tRNA(Thr) + AMP + diphosphate + H(+). Functionally, catalyzes the attachment of threonine to tRNA(Thr) in a two-step reaction: L-threonine is first activated by ATP to form Thr-AMP and then transferred to the acceptor end of tRNA(Thr). Also edits incorrectly charged L-seryl-tRNA(Thr). This Psychromonas ingrahamii (strain DSM 17664 / CCUG 51855 / 37) protein is Threonine--tRNA ligase.